Reading from the N-terminus, the 280-residue chain is Formamidopyrimidine-DNA glycosylase (280 aa).

The active-site Schiff-base intermediate with DNA is proline 2. Catalysis depends on glutamate 3, which acts as the Proton donor. Lysine 59 functions as the Proton donor; for beta-elimination activity in the catalytic mechanism. DNA contacts are provided by histidine 92 and arginine 111. An FPG-type zinc finger spans residues 239–273; sequence NVYGQTGLPCNRCGTPIVKTKVAQRGTHYCPQCQQ. The Proton donor; for delta-elimination activity role is filled by arginine 263.

This sequence belongs to the FPG family. As to quaternary structure, monomer. It depends on Zn(2+) as a cofactor.

It catalyses the reaction Hydrolysis of DNA containing ring-opened 7-methylguanine residues, releasing 2,6-diamino-4-hydroxy-5-(N-methyl)formamidopyrimidine.. The catalysed reaction is 2'-deoxyribonucleotide-(2'-deoxyribose 5'-phosphate)-2'-deoxyribonucleotide-DNA = a 3'-end 2'-deoxyribonucleotide-(2,3-dehydro-2,3-deoxyribose 5'-phosphate)-DNA + a 5'-end 5'-phospho-2'-deoxyribonucleoside-DNA + H(+). In terms of biological role, involved in base excision repair of DNA damaged by oxidation or by mutagenic agents. Acts as a DNA glycosylase that recognizes and removes damaged bases. Has a preference for oxidized purines, such as 7,8-dihydro-8-oxoguanine (8-oxoG). Has AP (apurinic/apyrimidinic) lyase activity and introduces nicks in the DNA strand. Cleaves the DNA backbone by beta-delta elimination to generate a single-strand break at the site of the removed base with both 3'- and 5'-phosphates. In Enterococcus faecalis (strain ATCC 700802 / V583), this protein is Formamidopyrimidine-DNA glycosylase.